The primary structure comprises 379 residues: Queuine tRNA-ribosyltransferase (379 aa).

Asp-94 functions as the Proton acceptor in the catalytic mechanism. Residues 94–98 (DSGGF), Asp-148, Gln-191, and Gly-218 contribute to the substrate site. An RNA binding region spans residues 249 to 255 (GVGSPDA). The Nucleophile role is filled by Asp-268. Residues 273 to 277 (TRIAR) form an RNA binding; important for wobble base 34 recognition region. Zn(2+) contacts are provided by Cys-306, Cys-308, Cys-311, and His-337.

Belongs to the queuine tRNA-ribosyltransferase family. As to quaternary structure, homodimer. Within each dimer, one monomer is responsible for RNA recognition and catalysis, while the other monomer binds to the replacement base PreQ1. The cofactor is Zn(2+).

The catalysed reaction is 7-aminomethyl-7-carbaguanine + guanosine(34) in tRNA = 7-aminomethyl-7-carbaguanosine(34) in tRNA + guanine. The protein operates within tRNA modification; tRNA-queuosine biosynthesis. Catalyzes the base-exchange of a guanine (G) residue with the queuine precursor 7-aminomethyl-7-deazaguanine (PreQ1) at position 34 (anticodon wobble position) in tRNAs with GU(N) anticodons (tRNA-Asp, -Asn, -His and -Tyr). Catalysis occurs through a double-displacement mechanism. The nucleophile active site attacks the C1' of nucleotide 34 to detach the guanine base from the RNA, forming a covalent enzyme-RNA intermediate. The proton acceptor active site deprotonates the incoming PreQ1, allowing a nucleophilic attack on the C1' of the ribose to form the product. After dissociation, two additional enzymatic reactions on the tRNA convert PreQ1 to queuine (Q), resulting in the hypermodified nucleoside queuosine (7-(((4,5-cis-dihydroxy-2-cyclopenten-1-yl)amino)methyl)-7-deazaguanosine). This chain is Queuine tRNA-ribosyltransferase, found in Staphylococcus epidermidis (strain ATCC 35984 / DSM 28319 / BCRC 17069 / CCUG 31568 / BM 3577 / RP62A).